The primary structure comprises 571 residues: Proline--tRNA ligase (571 aa).

This sequence belongs to the class-II aminoacyl-tRNA synthetase family. ProS type 1 subfamily. Homodimer.

The protein resides in the cytoplasm. It catalyses the reaction tRNA(Pro) + L-proline + ATP = L-prolyl-tRNA(Pro) + AMP + diphosphate. Catalyzes the attachment of proline to tRNA(Pro) in a two-step reaction: proline is first activated by ATP to form Pro-AMP and then transferred to the acceptor end of tRNA(Pro). As ProRS can inadvertently accommodate and process non-cognate amino acids such as alanine and cysteine, to avoid such errors it has two additional distinct editing activities against alanine. One activity is designated as 'pretransfer' editing and involves the tRNA(Pro)-independent hydrolysis of activated Ala-AMP. The other activity is designated 'posttransfer' editing and involves deacylation of mischarged Ala-tRNA(Pro). The misacylated Cys-tRNA(Pro) is not edited by ProRS. This is Proline--tRNA ligase from Shewanella baltica (strain OS155 / ATCC BAA-1091).